The following is a 182-amino-acid chain: uncharacterized protein (182 aa).

Residues 151-172 are disordered; the sequence is RGPGKPFADEKPCPRERPPADQ. Basic and acidic residues predominate over residues 157–169; it reads FADEKPCPRERPP.

This is an uncharacterized protein from Mycobacterium tuberculosis (strain CDC 1551 / Oshkosh).